The chain runs to 806 residues: Glycerol-3-phosphate acyltransferase (806 aa).

Positions Cys-305 to Met-310 match the HXXXXD motif motif.

It belongs to the GPAT/DAPAT family.

The protein localises to the cell inner membrane. The catalysed reaction is sn-glycerol 3-phosphate + an acyl-CoA = a 1-acyl-sn-glycero-3-phosphate + CoA. It participates in phospholipid metabolism; CDP-diacylglycerol biosynthesis; CDP-diacylglycerol from sn-glycerol 3-phosphate: step 1/3. The chain is Glycerol-3-phosphate acyltransferase from Enterobacter sp. (strain 638).